A 251-amino-acid chain; its full sequence is Dehydration-responsive element-binding protein 1I (251 aa).

A disordered region spans residues 1–50 (MCTSKLEEITGEWPPPALQAASTTSSSEPCRRLSPPSSKRPAGRTKFHET). A DNA-binding region (AP2/ERF) is located at residues 54-114 (VFRGVRRRGR…GRAAACLNFA (61 aa)). The disordered stretch occupies residues 169 to 198 (ATSEPSAASDDDAVTSSSSTTDADEEASPF).

This sequence belongs to the AP2/ERF transcription factor family. ERF subfamily.

It localises to the nucleus. Its function is as follows. Transcriptional activator that binds specifically to the DNA sequence 5'-[AG]CCGAC-3'. Binding to the C-repeat/DRE element mediates high salinity- and dehydration-inducible transcription. This is Dehydration-responsive element-binding protein 1I (DREB1I) from Oryza sativa subsp. japonica (Rice).